We begin with the raw amino-acid sequence, 378 residues long: Probable 3-hydroxyisobutyryl-CoA hydrolase 2 (378 aa).

Residues Gly-115, Glu-138, and Asp-146 each coordinate substrate. A Microbody targeting signal motif is present at residues 376 to 378 (AKL).

It belongs to the enoyl-CoA hydratase/isomerase family.

The protein resides in the peroxisome. The enzyme catalyses 3-hydroxy-2-methylpropanoyl-CoA + H2O = 3-hydroxy-2-methylpropanoate + CoA + H(+). Its pathway is amino-acid degradation; L-valine degradation. In terms of biological role, involved in valine catabolism. In Arabidopsis thaliana (Mouse-ear cress), this protein is Probable 3-hydroxyisobutyryl-CoA hydrolase 2.